Here is a 315-residue protein sequence, read N- to C-terminus: tRNA dimethylallyltransferase (315 aa).

10 to 17 contributes to the ATP binding site; sequence GPTEVGKT. Residue 12 to 17 participates in substrate binding; the sequence is TEVGKT. An interaction with substrate tRNA region spans residues 35–38; it reads DSMQ.

Belongs to the IPP transferase family. In terms of assembly, monomer. The cofactor is Mg(2+).

It carries out the reaction adenosine(37) in tRNA + dimethylallyl diphosphate = N(6)-dimethylallyladenosine(37) in tRNA + diphosphate. Functionally, catalyzes the transfer of a dimethylallyl group onto the adenine at position 37 in tRNAs that read codons beginning with uridine, leading to the formation of N6-(dimethylallyl)adenosine (i(6)A). This is tRNA dimethylallyltransferase from Geobacillus thermodenitrificans (strain NG80-2).